The following is a 272-amino-acid chain: NH(3)-dependent NAD(+) synthetase (272 aa).

Residue 45–52 (GISGGQDS) participates in ATP binding. Asp-51 provides a ligand contact to Mg(2+). Position 138 (Arg-138) interacts with deamido-NAD(+). Residue Thr-158 coordinates ATP. Residue Glu-163 coordinates Mg(2+). Residues Lys-171 and Asp-178 each contribute to the deamido-NAD(+) site. The ATP site is built by Lys-187 and Thr-209. Residue 258–259 (HK) coordinates deamido-NAD(+).

The protein belongs to the NAD synthetase family. Homodimer.

It carries out the reaction deamido-NAD(+) + NH4(+) + ATP = AMP + diphosphate + NAD(+) + H(+). Its pathway is cofactor biosynthesis; NAD(+) biosynthesis; NAD(+) from deamido-NAD(+) (ammonia route): step 1/1. Catalyzes the ATP-dependent amidation of deamido-NAD to form NAD. Uses ammonia as a nitrogen source. This Bacillus cereus (strain Q1) protein is NH(3)-dependent NAD(+) synthetase.